The primary structure comprises 404 residues: MDFNMKKLASDAGIFFTRAVQFTEEKFGQAEKTELDAHFENLLARADSTKNWTERILRQTEVLLQPNPSARVEEFLYEKLDRKVPSRVTNGELLAQYMAEAASELGPNTPYGKTLMKVSEAEKRLGAAERDFIHTASLSFLTPLRNFLEGDWKTISKERRLLQNRRLDLDACKARLKKAKAAEAKATCEGDTVPDFQETRPRNYILSASASALWNDEVDKAEQELRAAQTEFDRQAEVTRLLLEGISSAHVNHLRCLHEFVKSQTTYYAQCYRHMLDLQKQLGSSQGAIFPGTFVGTTEPASPPLSSTSPTTTAATMPVVPTGAGLAPPEEAALCLEEVAPPASGTRKARVLYDYEAADSSELALLADELITVYSLPGMDPDWLIGERGNKKGKVPVTYLELLS.

Methionine 1 is modified (N-acetylmethionine). The segment at 1-27 is membrane-binding amphipathic helix; the sequence is MDFNMKKLASDAGIFFTRAVQFTEEKF. Serine 10 is subject to Phosphoserine. The region spanning 24–291 is the BAR domain; it reads EEKFGQAEKT…LGSSQGAIFP (268 aa). Residues 209-239 are a coiled coil; sequence SASALWNDEVDKAEQELRAAQTEFDRQAEVT. The region spanning 344–404 is the SH3 domain; it reads SGTRKARVLY…VPVTYLELLS (61 aa). Serine 404 carries the post-translational modification Phosphoserine.

Belongs to the endophilin family. Homodimer, and heterodimer with SH3GLB1.

The protein resides in the cytoplasm. This is Endophilin-B2 from Rattus norvegicus (Rat).